Here is a 1040-residue protein sequence, read N- to C-terminus: Multidrug resistance protein MdtB (1040 aa).

Transmembrane regions (helical) follow at residues F16–I36, L347–A367, I369–L389, L396–I416, I440–F460, F472–P492, W537–I557, L863–I883, F888–A908, I911–V931, I968–V988, and I998–I1018.

It belongs to the resistance-nodulation-cell division (RND) (TC 2.A.6) family. MdtB subfamily. As to quaternary structure, part of a tripartite efflux system composed of MdtA, MdtB and MdtC. MdtB forms a heteromultimer with MdtC.

The protein localises to the cell inner membrane. Functionally, the MdtABC tripartite complex confers resistance against novobiocin and deoxycholate. This is Multidrug resistance protein MdtB from Escherichia coli O17:K52:H18 (strain UMN026 / ExPEC).